Reading from the N-terminus, the 444-residue chain is Glutamyl-tRNA reductase (444 aa).

Residues 49–52, Ser109, 114–116, and Gln120 each bind substrate; these read TCNR and ETQ. The active-site Nucleophile is Cys50. 189 to 194 lines the NADP(+) pocket; sequence GAGKMG.

Belongs to the glutamyl-tRNA reductase family. Homodimer.

The enzyme catalyses (S)-4-amino-5-oxopentanoate + tRNA(Glu) + NADP(+) = L-glutamyl-tRNA(Glu) + NADPH + H(+). The protein operates within porphyrin-containing compound metabolism; protoporphyrin-IX biosynthesis; 5-aminolevulinate from L-glutamyl-tRNA(Glu): step 1/2. In terms of biological role, catalyzes the NADPH-dependent reduction of glutamyl-tRNA(Glu) to glutamate 1-semialdehyde (GSA). In Bacillus anthracis (strain A0248), this protein is Glutamyl-tRNA reductase.